The primary structure comprises 324 residues: tRNA U34 carboxymethyltransferase (324 aa).

Carboxy-S-adenosyl-L-methionine-binding positions include Lys-91, Trp-105, Lys-110, Gly-130, 152–154 (DPS), 181–182 (IE), Met-196, Tyr-200, and Arg-315.

Belongs to the class I-like SAM-binding methyltransferase superfamily. CmoB family. As to quaternary structure, homotetramer.

The catalysed reaction is carboxy-S-adenosyl-L-methionine + 5-hydroxyuridine(34) in tRNA = 5-carboxymethoxyuridine(34) in tRNA + S-adenosyl-L-homocysteine + H(+). Functionally, catalyzes carboxymethyl transfer from carboxy-S-adenosyl-L-methionine (Cx-SAM) to 5-hydroxyuridine (ho5U) to form 5-carboxymethoxyuridine (cmo5U) at position 34 in tRNAs. This is tRNA U34 carboxymethyltransferase from Photobacterium profundum (strain SS9).